The primary structure comprises 373 residues: Cobalt-precorrin-5B C(1)-methyltransferase (373 aa).

Belongs to the CbiD family.

The enzyme catalyses Co-precorrin-5B + S-adenosyl-L-methionine = Co-precorrin-6A + S-adenosyl-L-homocysteine. Its pathway is cofactor biosynthesis; adenosylcobalamin biosynthesis; cob(II)yrinate a,c-diamide from sirohydrochlorin (anaerobic route): step 6/10. In terms of biological role, catalyzes the methylation of C-1 in cobalt-precorrin-5B to form cobalt-precorrin-6A. In Polaromonas sp. (strain JS666 / ATCC BAA-500), this protein is Cobalt-precorrin-5B C(1)-methyltransferase.